We begin with the raw amino-acid sequence, 268 residues long: MGSTFIAYTLENIKASPAWTMPPYEQIICSCEAGTRSIAVGKLSRCDHIPSSNFIIQRGPVGTLIVVDSGTDICSYLLRADESGSEYHTTSLSSLPESLCVIPFTTCTVMGTDAYVYNNSGGVLTIMWMGSSIYMTITIYGRHDTFAKTVDNLHLVQNCSRQFYPTVVAEPRKDDPQQNSEAAQVLSKSVPGFIEYVGANPTDTLHEHTPPILDKFPHISGEDILIEALREADLRMEDSQCSPVNYPSPMPYGFTEDSCLLESVKIYP.

The protein belongs to the alphaherpesvirinae HHV-1 UL4 family.

It localises to the host nucleus. The chain is Nuclear protein UL4 homolog (MDV016) from Gallid herpesvirus 2 (strain Chicken/Md5/ATCC VR-987) (GaHV-2).